Here is a 102-residue protein sequence, read N- to C-terminus: Urease subunit beta (102 aa).

The protein belongs to the urease beta subunit family. In terms of assembly, heterotrimer of UreA (gamma), UreB (beta) and UreC (alpha) subunits. Three heterotrimers associate to form the active enzyme.

It is found in the cytoplasm. It carries out the reaction urea + 2 H2O + H(+) = hydrogencarbonate + 2 NH4(+). Its pathway is nitrogen metabolism; urea degradation; CO(2) and NH(3) from urea (urease route): step 1/1. The sequence is that of Urease subunit beta from Clostridium perfringens.